The chain runs to 200 residues: HTH-type transcriptional regulator BetI (200 aa).

The HTH tetR-type domain occupies 8-68; the sequence is SIRKQQLIQA…AAMRHIQYQL (61 aa). Positions 31 to 50 form a DNA-binding region, H-T-H motif; the sequence is SIALIARKAGVSNGIISHYF.

It functions in the pathway amine and polyamine biosynthesis; betaine biosynthesis via choline pathway [regulation]. Repressor involved in the biosynthesis of the osmoprotectant glycine betaine. It represses transcription of the choline transporter BetT and the genes of BetAB involved in the synthesis of glycine betaine. This Proteus mirabilis (strain HI4320) protein is HTH-type transcriptional regulator BetI.